Here is an 805-residue protein sequence, read N- to C-terminus: Leucine--tRNA ligase (805 aa).

Residues 41–52 carry the 'HIGH' region motif; that stretch reads PYPSGAGLHVGH. The 'KMSKS' region signature appears at 577–581; that stretch reads KMSKS. Lys-580 serves as a coordination point for ATP.

It belongs to the class-I aminoacyl-tRNA synthetase family.

The protein localises to the cytoplasm. The catalysed reaction is tRNA(Leu) + L-leucine + ATP = L-leucyl-tRNA(Leu) + AMP + diphosphate. The protein is Leucine--tRNA ligase of Staphylococcus aureus (strain JH1).